A 519-amino-acid polypeptide reads, in one-letter code: AAA-ATPase At4g30250 (519 aa).

The first 24 residues, 1 to 24 (MSDYWTTMASLLGMLAFCQTIVQL), serve as a signal peptide directing secretion. 252-259 (GPPGTGKS) provides a ligand contact to ATP. Disordered regions lie at residues 315 to 335 (GKNKKKNGSYEYDPGLTNGSG) and 467 to 519 (KSVG…EKEK). Residues 479 to 488 (QEEEEEAEEE) are compositionally biased toward acidic residues. The span at 489–508 (QEKRALDSPNRRNREVCGFR) shows a compositional bias: basic and acidic residues. The span at 509 to 519 (EEEEEEDEKEK) shows a compositional bias: acidic residues.

This sequence belongs to the AAA ATPase family. BCS1 subfamily. Mg(2+) is required as a cofactor.

It catalyses the reaction ATP + H2O = ADP + phosphate + H(+). This chain is AAA-ATPase At4g30250, found in Arabidopsis thaliana (Mouse-ear cress).